A 93-amino-acid polypeptide reads, in one-letter code: Small ribosomal subunit protein uS19 (93 aa).

It belongs to the universal ribosomal protein uS19 family.

Functionally, protein S19 forms a complex with S13 that binds strongly to the 16S ribosomal RNA. The protein is Small ribosomal subunit protein uS19 of Nocardia farcinica (strain IFM 10152).